A 333-amino-acid polypeptide reads, in one-letter code: MVTFLEKISERAKKLNKTIALPETEDIRTLQAAAKILERGIADIVLVGNEADIKALAGDLDLSKAKIVDPKTYEKKDEYINAFYELRKHKGITLENAAEIMSDYVYFAVMMAKLGEVDGVVSGAAHSSSDTLRPAVQIVKTAKGAALASAFFIISVPDCEYGSDGTFLFADSGMVEMPSVEDVANIAVISAKTFELLVQDVPKVAMLSYSTKGSAKSKLTEATIASTKLAQELAPDIAIDGELQVDAAIVPKVAASKAPGSPVAGKANVFIFPDLNCGNIAYKIAQRLAKAEAYGPITQGLAKPINDLSRGCSDEDIVGAVAITCVQAAAQDK.

Belongs to the phosphate acetyltransferase and butyryltransferase family. As to quaternary structure, homodimer.

Its subcellular location is the cell membrane. It carries out the reaction acetyl-CoA + phosphate = acetyl phosphate + CoA. It functions in the pathway metabolic intermediate biosynthesis; acetyl-CoA biosynthesis; acetyl-CoA from acetate: step 2/2. This is Phosphate acetyltransferase (pta) from Methanosarcina thermophila.